The primary structure comprises 52 residues: UPF0181 protein CGSHiGG_01050 (52 aa).

Belongs to the UPF0181 family.

The sequence is that of UPF0181 protein CGSHiGG_01050 from Haemophilus influenzae (strain PittGG).